The following is a 256-amino-acid chain: Ribonuclease 3 (256 aa).

Residues 3–125 (LEALQQRLGY…IFGAVFLDGG (123 aa)) enclose the RNase III domain. Glutamate 38 is a Mg(2+) binding site. Residue aspartate 42 is part of the active site. Residues aspartate 111 and glutamate 114 each coordinate Mg(2+). Glutamate 114 is an active-site residue. The DRBM domain maps to 152 to 222 (DAKTLLQEYL…AKLALEEAHR (71 aa)). The tract at residues 227-256 (LVKRSRAERTGKTRKQATPPDPQLSLRLKE) is disordered.

Belongs to the ribonuclease III family. Homodimer. It depends on Mg(2+) as a cofactor.

The protein localises to the cytoplasm. The enzyme catalyses Endonucleolytic cleavage to 5'-phosphomonoester.. Its function is as follows. Digests double-stranded RNA. Involved in the processing of primary rRNA transcript to yield the immediate precursors to the large and small rRNAs (23S and 16S). Processes some mRNAs, and tRNAs when they are encoded in the rRNA operon. Processes pre-crRNA and tracrRNA of type II CRISPR loci if present in the organism. This chain is Ribonuclease 3, found in Ralstonia nicotianae (strain ATCC BAA-1114 / GMI1000) (Ralstonia solanacearum).